Reading from the N-terminus, the 214-residue chain is Adenylate kinase (214 aa).

ATP is bound at residue 10–15; it reads GAGKGT. The segment at 30–59 is NMP; it reads STGDMLRAAVKAGTPLGLEAKKVMDAGQLV. AMP is bound by residues Thr-31, Arg-36, 57–59, 85–88, and Gln-92; these read QLV and GFPR. The LID stretch occupies residues 122–159; that stretch reads GRRVHPGSGRVYHVVFNPPKVEGKDDVTGEDLAIRPDD. Residues Arg-123 and 132-133 contribute to the ATP site; that span reads VY. Arg-156 and Arg-167 together coordinate AMP. Gln-200 is an ATP binding site.

Belongs to the adenylate kinase family. As to quaternary structure, monomer.

Its subcellular location is the cytoplasm. It catalyses the reaction AMP + ATP = 2 ADP. The protein operates within purine metabolism; AMP biosynthesis via salvage pathway; AMP from ADP: step 1/1. Its function is as follows. Catalyzes the reversible transfer of the terminal phosphate group between ATP and AMP. Plays an important role in cellular energy homeostasis and in adenine nucleotide metabolism. In Shewanella oneidensis (strain ATCC 700550 / JCM 31522 / CIP 106686 / LMG 19005 / NCIMB 14063 / MR-1), this protein is Adenylate kinase.